A 700-amino-acid chain; its full sequence is Phenoloxidase 8 (700 aa).

Residues 1–51 constitute a propeptide that is removed on maturation; the sequence is MATLTQKFHGLLQHPLEPLFLPKNDGTLFYDLPERFLTSRYSPIGQNLANR. Asparagine 64 and asparagine 198 each carry an N-linked (GlcNAc...) asparagine glycan. Residues histidine 223, histidine 227, and histidine 252 each coordinate Cu cation. N-linked (GlcNAc...) asparagine glycosylation occurs at asparagine 295. The Proton acceptor role is filled by glutamate 364. Positions 379, 383, and 419 each coordinate Cu cation. Asparagine 445, asparagine 507, and asparagine 565 each carry an N-linked (GlcNAc...) asparagine glycan. 2 disulfide bridges follow: cysteine 592–cysteine 636 and cysteine 594–cysteine 643.

Belongs to the tyrosinase family. As to quaternary structure, homodimer. Requires Cu(2+) as cofactor. Upon activation, a trypsin type protease cleaves prophenol oxidase to yield the active enzyme.

It is found in the secreted. The enzyme catalyses 2 tyramine + O2 = 2 dopamine. The catalysed reaction is 2 dopamine + O2 = 2 dopamine quinone + 2 H2O. Its function is as follows. This is a copper-containing oxidase that functions in the formation of pigments such as melanins and other polyphenolic compounds. Catalyzes the oxidation of o-diphenols such as dopamine. Also oxidizes monophenols such as tyramine. The polypeptide is Phenoloxidase 8 (Anopheles gambiae (African malaria mosquito)).